A 638-amino-acid chain; its full sequence is Nitrous-oxide reductase (638 aa).

The tat-type signal signal peptide spans 1–52; that stretch reads MSDKDSKNTPQVPEKLGLSRRGFLGASAVTGAAVAATALGGAVMTRESWAQA. Cu cation contacts are provided by H129, H130, and H178. Residues Y256, E259, M267, D273, and N324 each coordinate Ca(2+). 3 residues coordinate Cu cation: H326, H382, and H433. 2 residues coordinate Ca(2+): K454 and E469. The Cu cation site is built by H494, H583, C618, W620, C622, H626, and M629. Positions 542–638 are COX2-like; it reads NKVRVYMTSM…MVGRMMVEPA (97 aa).

It belongs to the NosZ family. The protein in the C-terminal section; belongs to the cytochrome c oxidase subunit 2 family. Homodimer. The cofactor is Ca(2+). It depends on Cu cation as a cofactor. Predicted to be exported by the Tat system. The position of the signal peptide cleavage has not been experimentally proven. Post-translationally, the N-terminus is blocked.

Its subcellular location is the periplasm. It catalyses the reaction N2 + 2 Fe(III)-[cytochrome c] + H2O = nitrous oxide + 2 Fe(II)-[cytochrome c] + 2 H(+). The protein operates within nitrogen metabolism; nitrate reduction (denitrification); dinitrogen from nitrate: step 4/4. Its function is as follows. Nitrous-oxide reductase is part of a bacterial respiratory system which is activated under anaerobic conditions in the presence of nitrate or nitrous oxide. This chain is Nitrous-oxide reductase (nosZ), found in Stutzerimonas stutzeri (Pseudomonas stutzeri).